A 471-amino-acid polypeptide reads, in one-letter code: Probable ribonuclease FAU-1 (471 aa).

This sequence belongs to the FAU-1 family.

Functionally, probable RNase involved in rRNA stability through maturation and/or degradation of precursor rRNAs. Binds to RNA in loop regions with AU-rich sequences. The chain is Probable ribonuclease FAU-1 from Thermococcus gammatolerans (strain DSM 15229 / JCM 11827 / EJ3).